The following is a 316-amino-acid chain: Porphobilinogen deaminase (316 aa).

At Cys-249 the chain carries S-(dipyrrolylmethanemethyl)cysteine.

It belongs to the HMBS family. As to quaternary structure, monomer. The cofactor is dipyrromethane.

It catalyses the reaction 4 porphobilinogen + H2O = hydroxymethylbilane + 4 NH4(+). The protein operates within porphyrin-containing compound metabolism; protoporphyrin-IX biosynthesis; coproporphyrinogen-III from 5-aminolevulinate: step 2/4. Functionally, tetrapolymerization of the monopyrrole PBG into the hydroxymethylbilane pre-uroporphyrinogen in several discrete steps. The chain is Porphobilinogen deaminase from Nitrobacter winogradskyi (strain ATCC 25391 / DSM 10237 / CIP 104748 / NCIMB 11846 / Nb-255).